The following is a 214-amino-acid chain: rRNA N(6)-adenosine-methyltransferase metl-5 (214 aa).

S-adenosyl-L-methionine-binding positions include Gln-25, Thr-28, Gly-55, Cys-58, Asp-78, and 106–107 (DI).

The protein belongs to the methyltransferase superfamily. PrmA family. Heterodimer; heterodimerizes with TRMT112/C04H5.1.

It catalyses the reaction adenosine in rRNA + S-adenosyl-L-methionine = N(6)-methyladenosine in rRNA + S-adenosyl-L-homocysteine + H(+). Its function is as follows. Catalytic subunit of a heterodimer with TRMT112/C04H5.1, which specifically methylates the 6th position of adenine in position 1717 of 18S rRNA. In Caenorhabditis elegans, this protein is rRNA N(6)-adenosine-methyltransferase metl-5.